A 411-amino-acid polypeptide reads, in one-letter code: Argininosuccinate lyase (411 aa).

The protein belongs to the lyase 1 family. Argininosuccinate lyase subfamily.

Its subcellular location is the cytoplasm. It catalyses the reaction 2-(N(omega)-L-arginino)succinate = fumarate + L-arginine. The protein operates within amino-acid biosynthesis; L-arginine biosynthesis; L-arginine from L-ornithine and carbamoyl phosphate: step 3/3. In Legionella pneumophila (strain Paris), this protein is Argininosuccinate lyase.